The chain runs to 751 residues: Amyloid-beta precursor protein (751 aa).

The first 17 residues, 1–17 (MLPGLALLLLAAWTARA), serve as a signal peptide directing secretion. Residues 18-682 (LEVPTDGNAG…AEDVGSNKGA (665 aa)) lie on the Extracellular side of the membrane. Residues 28 to 123 (LLAEPQIAMF…PYRCLVGEFV (96 aa)) form a GFLD subdomain region. Positions 28–189 (LLAEPQIAMF…RGVEFVCCPL (162 aa)) constitute an E1 domain. 6 cysteine pairs are disulfide-bonded: C38/C62, C73/C117, C98/C105, C133/C187, C144/C174, and C158/C186. 96-110 (NWCKRDRKQCKTHPH) provides a ligand contact to heparin. The interval 131 to 189 (DKCKFLHQERMDVCETHLHWHTVAKETCSEKSTNLHDYGMLLPCGIDKFRGVEFVCCPL) is cuBD subdomain. Residues H147, H151, and Y168 each contribute to the Cu(2+) site. The interval 181–188 (GVEFVCCP) is zinc-binding. Zn(2+) contacts are provided by E183, C186, and C187. The interval 195-284 (HVDSADAEED…TTTTTTESVE (90 aa)) is disordered. Phosphoserine; by CK1 and CK2 occurs at positions 198 and 206. Sulfotyrosine occurs at positions 217 and 262. Acidic residues predominate over residues 228-264 (VAEEEEVAEVEEEEADDDEDDEDGDEVEEEAEEPYEE). The segment covering 268 to 281 (RTTSIATTTTTTTE) has biased composition (low complexity). 3 disulfide bridges follow: C291–C341, C300–C324, and C316–C337. Positions 291–341 (CSEQAETGPCRAMISRWYFDVTEGKCAPFFYGGCGGNRNNFDTEEYCMAVC) constitute a BPTI/Kunitz inhibitor domain. Heparin-binding stretches follow at residues 316–344 (CAPF…CGSV) and 363–428 (PGDE…QEAA). Y336 is modified (sulfotyrosine). Residues 344–346 (VIP) carry the OX-2 motif. The E2 domain maps to 355–546 (AVDKYLETPG…EEIQDEVDEL (192 aa)). Residue S422 is modified to Phosphoserine. Phosphotyrosine is present on Y478. Residues 504–521 (AAQIRSQVMTHLRVIYER) form a collagen-binding region. 2 N-linked (GlcNAc...) asparagine glycosylation sites follow: N523 and N552. 4 residues coordinate Cu(2+): H658, Y662, H665, and H666. 4 residues coordinate Zn(2+): H658, Y662, H665, and H666. The tract at residues 676–703 (VGSNKGAIIGLMVGGVVIATVIVITLVM) is interaction with PSEN1. A helical membrane pass occupies residues 683–703 (IIGLMVGGVVIATVIVITLVM). The Cytoplasmic segment spans residues 704-751 (LKKKQYTSIHHGVVEVDAAVTPEERHLSKMQQNGYENPTYKFFEQMQN). Positions 705-715 (KKKQYTSIHHG) match the Basolateral sorting signal motif. Position 710 is a phosphothreonine (T710). S711 bears the Phosphoserine; by APP-kinase I mark. The interval 713–732 (HHGVVEVDAAVTPEERHLSK) is interaction with G(o)-alpha. Position 724 is a phosphothreonine; by CDK5 and MAPK10 (T724). Residues 737–751 (GYENPTYKFFEQMQN) are required for the interaction with KIF5B and for anterograde transport in axons. Y738 carries the phosphotyrosine; by ABL1 modification. The YENPXY motif; contains endocytosis signal motif lies at 738–743 (YENPTY). K744 is covalently cross-linked (Glycyl lysine isopeptide (Lys-Gly) (interchain with G-Cter in ubiquitin)).

It belongs to the APP family. Binds, via its C-terminus, to the PID domain of several cytoplasmic proteins, including APBB family members, the APBA family, MAPK8IP1, SHC1 and NUMB and DAB1. Binding to DAB1 inhibits its serine phosphorylation. Interacts (via NPXY motif) with DAB2 (via PID domain); the interaction is impaired by tyrosine phosphorylation of the NPXY motif. Also interacts with GPCR-like protein BPP, APPBP1, IB1, KNS2 (via its TPR domains), APPBP2 (via BaSS) and DDB1. In vitro, it binds MAPT via the MT-binding domains. Associates with microtubules in the presence of ATP and in a kinesin-dependent manner. Interacts, through a C-terminal domain, with GNAO1. Amyloid-beta protein 42 binds CHRNA7 in hippocampal neurons. Amyloid-beta associates with HADH2. Interacts with CPEB1, ANKS1B and AGER. Interacts with ITM2B. Interacts with ITM2C. Interacts with IDE. Can form homodimers; dimerization is enhanced in the presence of Cu(2+) ions. Can form homodimers; this is promoted by heparin binding. Amyloid-beta protein 40 interacts with S100A9. CTF-alpha product of APP interacts with GSAP. Isoform APP695 interacts with SORL1 (via N-terminal ectodomain); this interaction retains APP in the trans-Golgi network and reduces processing into soluble APP-alpha and amyloid-beta peptides. Isoform APP770 interacts with SORL1. The C99 fragment also interacts with SORL1. Interacts with PLD3. Interacts with VDAC1. Interacts with NSG1; could regulate APP processing. Amyloid-beta protein 42 interacts with FPR2. Interacts (via transmembrane region) with PSEN1; the interaction is direct. Interacts with LRRK2. Interacts (via cytoplasmic domain) with KIF5B. Interacts (via C-terminus) with APBB2/FE65L1 (via C-terminus). Interacts (via intracellular domain) with APBB3. Proteolytically processed under normal cellular conditions. Cleavage either by alpha-secretase, beta-secretase or theta-secretase leads to generation and extracellular release of soluble APP peptides, S-APP-alpha and S-APP-beta, and the retention of corresponding membrane-anchored C-terminal fragments, C80, C83 and C99. Subsequent processing of C80 and C83 by gamma-secretase yields P3 peptides. This is the major secretory pathway and is non-amyloidogenic. Alternatively, presenilin/nicastrin-mediated gamma-secretase processing of C99 releases the amyloid-beta proteins, amyloid-beta protein 40 and amyloid-beta protein 42, major components of amyloid plaques, and the cytotoxic C-terminal fragments, gamma-CTF(50), gamma-CTF(57) and gamma-CTF(59). PSEN1 cleavage is more efficient with C83 than with C99 as substrate (in vitro). Amyloid-beta protein 40 and Amyloid-beta protein 42 are cleaved by ACE. Many other minor amyloid-beta peptides, amyloid-beta 1-X peptides, are found in cerebral spinal fluid (CSF) including the amyloid-beta X-15 peptides, produced from the cleavage by alpha-secretase. In terms of processing, proteolytically cleaved by caspases during neuronal apoptosis. Cleavage at Asp-720 by either caspase-3, -8 or -9 results in the production of the neurotoxic C31 peptide and the increased production of amyloid-beta peptides. Post-translationally, N- and O-glycosylated. Phosphorylation in the C-terminal on tyrosine, threonine and serine residues is neuron-specific. Phosphorylation can affect APP processing, neuronal differentiation and interaction with other proteins. Phosphorylated on Thr-724 in neuronal cells by Cdc5 kinase and Mapk10, in dividing cells by Cdc2 kinase in a cell-cycle dependent manner with maximal levels at the G2/M phase and, in vitro, by GSK-3-beta. The Thr-724 phosphorylated form causes a conformational change which reduces binding of Fe65 family members. In dopaminergic (DA) neurons, phosphorylation on Thr-724 by LRKK2 promotes the production and the nuclear translocation of the APP intracellular domain (AICD) which induces DA neuron apoptosis. Phosphorylation on Tyr-738 is required for SHC binding. Phosphorylated in the extracellular domain by casein kinases on both soluble and membrane-bound APP. This phosphorylation is inhibited by heparin. In terms of processing, trophic-factor deprivation triggers the cleavage of surface APP by beta-secretase to release sAPP-beta which is further cleaved to release an N-terminal fragment of APP (N-APP). Post-translationally, amyloid-beta peptides are degraded by IDE. Sulfated on tyrosine residues.

The protein localises to the cell membrane. Its subcellular location is the membrane. It localises to the perikaryon. It is found in the cell projection. The protein resides in the growth cone. The protein localises to the clathrin-coated pit. Its subcellular location is the early endosome. It localises to the cytoplasmic vesicle. It is found in the endoplasmic reticulum. The protein resides in the golgi apparatus. The protein localises to the secreted. Its subcellular location is the cell surface. It localises to the nucleus. It is found in the cytoplasm. Functions as a cell surface receptor and performs physiological functions on the surface of neurons relevant to neurite growth, neuronal adhesion and axonogenesis. Interaction between APP molecules on neighboring cells promotes synaptogenesis. Involved in cell mobility and transcription regulation through protein-protein interactions. Can promote transcription activation through binding to APBB1-KAT5 and inhibit Notch signaling through interaction with Numb. Couples to apoptosis-inducing pathways such as those mediated by G(o) and JIP. Inhibits G(o)-alpha ATPase activity. Acts as a kinesin I membrane receptor, mediating the axonal transport of beta-secretase and presenilin 1. By acting as a kinesin I membrane receptor, plays a role in axonal anterograde transport of cargo towards synapses in axons. May be involved in copper homeostasis/oxidative stress through copper ion reduction. In vitro, copper-metallated APP induces neuronal death directly or is potentiated through Cu(2+)-mediated low-density lipoprotein oxidation. Can regulate neurite outgrowth through binding to components of the extracellular matrix such as heparin and collagen I and IV. Induces a AGER-dependent pathway that involves activation of p38 MAPK, resulting in internalization of amyloid-beta peptide and mitochondrial dysfunction in cultured cortical neurons. Provides Cu(2+) ions for GPC1 which are required for release of nitric oxide (NO) and subsequent degradation of the heparan sulfate chains on GPC1. Its function is as follows. Amyloid-beta peptides are lipophilic metal chelators with metal-reducing activity. Binds transient metals such as copper, zinc and iron. Functionally, the gamma-CTF peptides as well as the caspase-cleaved peptides, including C31, are potent enhancers of neuronal apoptosis. The protein is Amyloid-beta precursor protein of Saimiri sciureus (Common squirrel monkey).